Reading from the N-terminus, the 1131-residue chain is RNA2 polyprotein (1131 aa).

Residues 213–236 (ALRTHPGGPALPPLPPPPPIQKPP) are disordered. Residues 221 to 234 (PALPPLPPPPPIQK) show a composition bias toward pro residues.

Belongs to the nepoviruses RNA2 polyprotein family. In terms of processing, specific enzymatic cleavages in vivo by the P1 encoded 3C-like protease yield mature proteins.

The protein resides in the host cell junction. It is found in the host plasmodesma. It localises to the virion. Its function is as follows. Implicated in RNA2 replication. Could also be required for nematode transmission of the virus. In terms of biological role, transports viral genome to neighboring plant cells directly through plasmosdesmata, without any budding. The movement protein allows efficient cell to cell propagation, by bypassing the host cell wall barrier. Acts by forming a tubular structure at the host plasmodesmata, enlarging it enough to allow free passage of virion capsids. This chain is RNA2 polyprotein, found in Vitis vinifera (Grape).